Reading from the N-terminus, the 445-residue chain is Bifunctional protein GlmU (445 aa).

Residues 1 to 218 (MRALVLAAGK…LLEITGVNTR (218 aa)) are pyrophosphorylase. UDP-N-acetyl-alpha-D-glucosamine contacts are provided by residues 6–9 (LAAG), Lys20, Gln69, 74–75 (GT), 96–98 (YGD), Gly134, Glu147, Asn162, and Asn216. Residue Asp98 participates in Mg(2+) binding. Mg(2+) is bound at residue Asn216. The interval 219–239 (KTLVWLEEQLRMRKIEELLEN) is linker. Residues 240–445 (GVTILDPATT…GWVLKKRKEE (206 aa)) form an N-acetyltransferase region. UDP-N-acetyl-alpha-D-glucosamine is bound by residues Arg321 and Lys339. His351 acts as the Proton acceptor in catalysis. UDP-N-acetyl-alpha-D-glucosamine-binding residues include Tyr354 and Asn365. Acetyl-CoA-binding positions include Ala368, 374–375 (NY), Ser393, Ala411, and Arg428.

This sequence in the N-terminal section; belongs to the N-acetylglucosamine-1-phosphate uridyltransferase family. It in the C-terminal section; belongs to the transferase hexapeptide repeat family. Homotrimer. It depends on Mg(2+) as a cofactor.

The protein resides in the cytoplasm. The enzyme catalyses alpha-D-glucosamine 1-phosphate + acetyl-CoA = N-acetyl-alpha-D-glucosamine 1-phosphate + CoA + H(+). It catalyses the reaction N-acetyl-alpha-D-glucosamine 1-phosphate + UTP + H(+) = UDP-N-acetyl-alpha-D-glucosamine + diphosphate. Its pathway is nucleotide-sugar biosynthesis; UDP-N-acetyl-alpha-D-glucosamine biosynthesis; N-acetyl-alpha-D-glucosamine 1-phosphate from alpha-D-glucosamine 6-phosphate (route II): step 2/2. The protein operates within nucleotide-sugar biosynthesis; UDP-N-acetyl-alpha-D-glucosamine biosynthesis; UDP-N-acetyl-alpha-D-glucosamine from N-acetyl-alpha-D-glucosamine 1-phosphate: step 1/1. It functions in the pathway bacterial outer membrane biogenesis; LPS lipid A biosynthesis. Catalyzes the last two sequential reactions in the de novo biosynthetic pathway for UDP-N-acetylglucosamine (UDP-GlcNAc). The C-terminal domain catalyzes the transfer of acetyl group from acetyl coenzyme A to glucosamine-1-phosphate (GlcN-1-P) to produce N-acetylglucosamine-1-phosphate (GlcNAc-1-P), which is converted into UDP-GlcNAc by the transfer of uridine 5-monophosphate (from uridine 5-triphosphate), a reaction catalyzed by the N-terminal domain. The protein is Bifunctional protein GlmU of Thermotoga sp. (strain RQ2).